The chain runs to 497 residues: Glycerol kinase (497 aa).

An ADP-binding site is contributed by Thr-12. 3 residues coordinate ATP: Thr-12, Thr-13, and Ser-14. Thr-12 serves as a coordination point for sn-glycerol 3-phosphate. Arg-16 contacts ADP. 4 residues coordinate sn-glycerol 3-phosphate: Arg-82, Glu-83, Tyr-134, and Asp-243. Glycerol contacts are provided by Arg-82, Glu-83, Tyr-134, Asp-243, and Gln-244. 2 residues coordinate ADP: Thr-265 and Gly-308. Thr-265, Gly-308, Gln-312, and Gly-409 together coordinate ATP. Residues Gly-409 and Asn-413 each contribute to the ADP site.

This sequence belongs to the FGGY kinase family.

It carries out the reaction glycerol + ATP = sn-glycerol 3-phosphate + ADP + H(+). It participates in polyol metabolism; glycerol degradation via glycerol kinase pathway; sn-glycerol 3-phosphate from glycerol: step 1/1. With respect to regulation, inhibited by fructose 1,6-bisphosphate (FBP). Functionally, key enzyme in the regulation of glycerol uptake and metabolism. Catalyzes the phosphorylation of glycerol to yield sn-glycerol 3-phosphate. The chain is Glycerol kinase from Oleidesulfovibrio alaskensis (strain ATCC BAA-1058 / DSM 17464 / G20) (Desulfovibrio alaskensis).